A 226-amino-acid polypeptide reads, in one-letter code: UPF0758 protein SPs0978 (226 aa).

The MPN domain occupies 103–225; that stretch reads SVLTSVQVAE…YYSFREKSTL (123 aa). His174, His176, and Asp187 together coordinate Zn(2+). Positions 174–187 match the JAMM motif motif; sequence HNHPSGNIEPSSND.

It belongs to the UPF0758 family.

The protein is UPF0758 protein SPs0978 of Streptococcus pyogenes serotype M3 (strain SSI-1).